The chain runs to 214 residues: Large ribosomal subunit protein uL16 (214 aa).

At Arg-32 the chain carries Citrulline. Lys-175 is covalently cross-linked (Glycyl lysine isopeptide (Lys-Gly) (interchain with G-Cter in SUMO2)). Lys-188 participates in a covalent cross-link: Glycyl lysine isopeptide (Lys-Gly) (interchain with G-Cter in ubiquitin).

Belongs to the universal ribosomal protein uL16 family. Component of the large ribosomal subunit. Mature ribosomes consist of a small (40S) and a large (60S) subunit. The 40S subunit contains about 33 different proteins and 1 molecule of RNA (18S). The 60S subunit contains about 49 different proteins and 3 molecules of RNA (28S, 5.8S and 5S). In terms of processing, citrullinated by PADI4. Ufmylated by UFL1.

The protein resides in the cytoplasm. In terms of biological role, component of the large ribosomal subunit. Plays a role in the formation of actively translating ribosomes. May play a role in the embryonic brain development. This is Large ribosomal subunit protein uL16 from Homo sapiens (Human).